The sequence spans 308 residues: Methionyl-tRNA formyltransferase (308 aa).

(6S)-5,6,7,8-tetrahydrofolate is bound at residue 109-112 (SLLP).

This sequence belongs to the Fmt family.

It carries out the reaction L-methionyl-tRNA(fMet) + (6R)-10-formyltetrahydrofolate = N-formyl-L-methionyl-tRNA(fMet) + (6S)-5,6,7,8-tetrahydrofolate + H(+). In terms of biological role, attaches a formyl group to the free amino group of methionyl-tRNA(fMet). The formyl group appears to play a dual role in the initiator identity of N-formylmethionyl-tRNA by promoting its recognition by IF2 and preventing the misappropriation of this tRNA by the elongation apparatus. This Methylococcus capsulatus (strain ATCC 33009 / NCIMB 11132 / Bath) protein is Methionyl-tRNA formyltransferase.